A 235-amino-acid polypeptide reads, in one-letter code: Voltage-gated hydrogen channel 1 (235 aa).

Over 1 to 62 (MSRYLKHFTV…VMKKLFSSRR (62 aa)) the chain is Cytoplasmic. The chain crosses the membrane as a helical span at residues 63 to 83 (FQIVIVFLVIVDALLVLGELL). The Extracellular segment spans residues 84–100 (MDLKIIHPDKYHIAPKV). A helical membrane pass occupies residues 101-123 (FHYLSLSILTIFLVEVGFKIFVY). At 124 to 131 (GREFFHHK) the chain is on the cytoplasmic side. A helical transmembrane segment spans residues 132-152 (FEVLDSIVVVVSFILDLVLLF). Over 153–159 (REHEFEA) the chain is Extracellular. A helical transmembrane segment spans residues 160 to 180 (VGLLILLRLWRVARIINGIIL). Residues 181 to 235 (SVKTRSEQQVSKLKQVNLKLATKVEQLQHSCVEKEQEIERLTRMLKQHGLLSEQT) lie on the Cytoplasmic side of the membrane. Positions 187–228 (EQQVSKLKQVNLKLATKVEQLQHSCVEKEQEIERLTRMLKQH) form a coiled coil.

It belongs to the hydrogen channel family. In terms of assembly, homodimer.

Its subcellular location is the membrane. It localises to the cell membrane. Mediates the voltage-dependent proton permeability of excitable membranes. Forms a proton-selective channel through which protons may pass in accordance with their electrochemical gradient. This chain is Voltage-gated hydrogen channel 1 (HVCN1), found in Gallus gallus (Chicken).